The sequence spans 764 residues: 5-methyltetrahydropteroyltriglutamate--homocysteine methyltransferase (764 aa).

5-methyltetrahydropteroyltri-L-glutamate is bound by residues 16 to 19 and lysine 115; that span reads RELK. Residues 435-437 and glutamate 488 contribute to the L-homocysteine site; that span reads IGS. L-methionine is bound by residues 435–437 and glutamate 488; that span reads IGS. 5-methyltetrahydropteroyltri-L-glutamate is bound by residues 519–520 and tryptophan 565; that span reads RC. Residue aspartate 603 coordinates L-homocysteine. Aspartate 603 serves as a coordination point for L-methionine. 5-methyltetrahydropteroyltri-L-glutamate is bound at residue glutamate 609. Residues histidine 645, cysteine 647, and glutamate 669 each coordinate Zn(2+). Histidine 698 functions as the Proton donor in the catalytic mechanism. Residue cysteine 730 coordinates Zn(2+).

This sequence belongs to the vitamin-B12 independent methionine synthase family. Zn(2+) is required as a cofactor.

The enzyme catalyses 5-methyltetrahydropteroyltri-L-glutamate + L-homocysteine = tetrahydropteroyltri-L-glutamate + L-methionine. Its pathway is amino-acid biosynthesis; L-methionine biosynthesis via de novo pathway; L-methionine from L-homocysteine (MetE route): step 1/1. Catalyzes the transfer of a methyl group from 5-methyltetrahydrofolate to homocysteine resulting in methionine formation. The sequence is that of 5-methyltetrahydropteroyltriglutamate--homocysteine methyltransferase from Burkholderia pseudomallei (strain 1106a).